Consider the following 495-residue polypeptide: Cytochrome P450 monooxygenase 64 (495 aa).

The chain crosses the membrane as a helical span at residues 2–22; sequence FLQIVTSVLATGLLYALISVL. N-linked (GlcNAc...) asparagine glycosylation is found at Asn-25 and Asn-198. Heme is bound at residue Cys-428.

It belongs to the cytochrome P450 family. Requires heme as cofactor.

The protein resides in the membrane. It functions in the pathway secondary metabolite biosynthesis. In terms of biological role, cytochrome P450 monooxygenase that is able to use 4-ethoxybenzoic acid as a substrate for oxidation. This Postia placenta (strain ATCC 44394 / Madison 698-R) (Brown rot fungus) protein is Cytochrome P450 monooxygenase 64.